A 94-amino-acid chain; its full sequence is Large ribosomal subunit protein uL23 (94 aa).

Belongs to the universal ribosomal protein uL23 family. In terms of assembly, part of the 50S ribosomal subunit. Contacts protein L29, and trigger factor when it is bound to the ribosome.

Functionally, one of the early assembly proteins it binds 23S rRNA. One of the proteins that surrounds the polypeptide exit tunnel on the outside of the ribosome. Forms the main docking site for trigger factor binding to the ribosome. The chain is Large ribosomal subunit protein uL23 from Latilactobacillus sakei subsp. sakei (strain 23K) (Lactobacillus sakei subsp. sakei).